The primary structure comprises 417 residues: Histidine--tRNA ligase (417 aa).

This sequence belongs to the class-II aminoacyl-tRNA synthetase family. As to quaternary structure, homodimer.

It is found in the cytoplasm. It carries out the reaction tRNA(His) + L-histidine + ATP = L-histidyl-tRNA(His) + AMP + diphosphate + H(+). This is Histidine--tRNA ligase from Acetivibrio thermocellus (strain ATCC 27405 / DSM 1237 / JCM 9322 / NBRC 103400 / NCIMB 10682 / NRRL B-4536 / VPI 7372) (Clostridium thermocellum).